The sequence spans 196 residues: Charged multivesicular body protein 1a (196 aa).

Residue methionine 1 is modified to N-acetylmethionine. The stretch at 5-42 (LFQLKFTAKQLEKLAKKAEKDSKAEQAKVKKALQQKNV) forms a coiled coil. Serine 101 is subject to Phosphoserine. Positions 102-124 (AMDLQKVSAVMDRFEQQVQNLDV) form a coiled coil. The residue at position 173 (serine 173) is a Phosphoserine. Positions 185–195 (DQLSRRLAALR) match the MIT-interacting motif motif.

The protein belongs to the SNF7 family. Probable peripherally associated component of the endosomal sorting required for transport complex III (ESCRT-III). ESCRT-III components are thought to multimerize to form a flat lattice on the perimeter membrane of the endosome. Several assembly forms of ESCRT-III may exist that interact and act sequentially. Self-associates. Interacts with CHMP1B. Interacts with VPS4A. Interacts with VPS4B. Interacts with PHF1. Interacts with IST1. Interacts with MITD1. In terms of tissue distribution, highly expressed in adult heart, kidney and liver. Expressed at lower levels in adult colon, spleen, lung, brain, testis and muscle. Also expressed in myoblasts and embryo fibroblasts.

The protein localises to the cytoplasm. The protein resides in the endosome membrane. It is found in the nucleus matrix. Probable peripherally associated component of the endosomal sorting required for transport complex III (ESCRT-III) which is involved in multivesicular bodies (MVBs) formation and sorting of endosomal cargo proteins into MVBs. MVBs contain intraluminal vesicles (ILVs) that are generated by invagination and scission from the limiting membrane of the endosome and mostly are delivered to lysosomes enabling degradation of membrane proteins, such as stimulated growth factor receptors, lysosomal enzymes and lipids. The MVB pathway appears to require the sequential function of ESCRT-O, -I,-II and -III complexes. ESCRT-III proteins mostly dissociate from the invaginating membrane before the ILV is released. The ESCRT machinery also functions in topologically equivalent membrane fission events, such as the terminal stages of cytokinesis. ESCRT-III proteins are believed to mediate the necessary vesicle extrusion and/or membrane fission activities, possibly in conjunction with the AAA ATPase VPS4. Involved in cytokinesis. Involved in recruiting VPS4A and/or VPS4B to the midbody of dividing cells. May also be involved in chromosome condensation. Targets the Polycomb group (PcG) protein BMI1/PCGF4 to regions of condensed chromatin. May play a role in stable cell cycle progression and in PcG gene silencing. The chain is Charged multivesicular body protein 1a (Chmp1a) from Mus musculus (Mouse).